Here is a 267-residue protein sequence, read N- to C-terminus: Nus factor SuhB (267 aa).

Mg(2+)-binding residues include E67, D84, and L86. E67 lines the substrate pocket. Substrate contacts are provided by residues L86 to T89, R183, and D212.

It belongs to the inositol monophosphatase superfamily. In terms of assembly, homodimer. The rRNA transcription and antitermination complex (rrnTAC) consists of RNA polymerase (RNAP), NusA, NusB, NusE (rpsJ), NusG, SubB, ribosomal protein S4, DNA and precursor rRNA; S4 is more flexible than other subunits. The cofactor is Mg(2+).

It is found in the cytoplasm. It carries out the reaction a myo-inositol phosphate + H2O = myo-inositol + phosphate. In terms of biological role, part of the processive rRNA transcription and antitermination complex (rrnTAC). The complex forms an RNA-chaperone ring around the RNA exit tunnel of RNA polymerase (RNAP). It supports rapid transcription and antitermination of rRNA operons, cotranscriptional rRNA folding, and annealing of distal rRNA regions to allow correct ribosome biogenesis. This subunit may play a central role in organizing the structure. IMPase activity is not required for its Nus factor function. In Escherichia coli O157:H7, this protein is Nus factor SuhB (suhB).